Here is a 295-residue protein sequence, read N- to C-terminus: Universal stress protein Mb2028c (295 aa).

Residues glycine 13, 117–123 (GSSGRGA), 131–132 (SV), glycine 165, aspartate 198, 262–268 (GSHGRGG), and 276–278 (SVS) contribute to the ATP site.

It belongs to the universal stress protein A family.

The polypeptide is Universal stress protein Mb2028c (Mycobacterium bovis (strain ATCC BAA-935 / AF2122/97)).